Here is a 415-residue protein sequence, read N- to C-terminus: Squalene synthase 1 (415 aa).

Helical transmembrane passes span 281-301 (AIFR…ALCF) and 391-411 (LIAI…SNLL).

It belongs to the phytoene/squalene synthase family. Mg(2+) is required as a cofactor. It depends on Mn(2+) as a cofactor. In terms of tissue distribution, mostly expressed in the shoot apex (buds) and roots, and, to a lower extent, in stems, leaves, flowers and seeds.

It localises to the endoplasmic reticulum membrane. The catalysed reaction is 2 (2E,6E)-farnesyl diphosphate + NADH + H(+) = squalene + 2 diphosphate + NAD(+). It catalyses the reaction 2 (2E,6E)-farnesyl diphosphate + NADPH + H(+) = squalene + 2 diphosphate + NADP(+). It functions in the pathway terpene metabolism; lanosterol biosynthesis; lanosterol from farnesyl diphosphate: step 1/3. Its function is as follows. Component of the triterpene saponins (e.g. ginsenosides or panaxosides) and phytosterols biosynthetic pathways. Catalyzes the biosynthesis of squalene. This Panax ginseng (Korean ginseng) protein is Squalene synthase 1.